Consider the following 184-residue polypeptide: Acireductone dioxygenase (184 aa).

H97, H99, E103, and H141 together coordinate Fe(2+). Ni(2+) is bound by residues H97, H99, E103, and H141.

The protein belongs to the acireductone dioxygenase (ARD) family. As to quaternary structure, monomer. Fe(2+) serves as cofactor. It depends on Ni(2+) as a cofactor.

The enzyme catalyses 1,2-dihydroxy-5-(methylsulfanyl)pent-1-en-3-one + O2 = 3-(methylsulfanyl)propanoate + CO + formate + 2 H(+). It carries out the reaction 1,2-dihydroxy-5-(methylsulfanyl)pent-1-en-3-one + O2 = 4-methylsulfanyl-2-oxobutanoate + formate + 2 H(+). It participates in amino-acid biosynthesis; L-methionine biosynthesis via salvage pathway; L-methionine from S-methyl-5-thio-alpha-D-ribose 1-phosphate: step 5/6. In terms of biological role, catalyzes 2 different reactions between oxygen and the acireductone 1,2-dihydroxy-3-keto-5-methylthiopentene (DHK-MTPene) depending upon the metal bound in the active site. Fe-containing acireductone dioxygenase (Fe-ARD) produces formate and 2-keto-4-methylthiobutyrate (KMTB), the alpha-ketoacid precursor of methionine in the methionine recycle pathway. Ni-containing acireductone dioxygenase (Ni-ARD) produces methylthiopropionate, carbon monoxide and formate, and does not lie on the methionine recycle pathway. In Parvibaculum lavamentivorans (strain DS-1 / DSM 13023 / NCIMB 13966), this protein is Acireductone dioxygenase.